The sequence spans 25 residues: Panurgine R (25 aa).

Disulfide bonds link C8–C23 and C11–C19.

The protein localises to the target cell membrane. Its subcellular location is the secreted. Its function is as follows. Antimicrobial peptide active against Gram-positive bacteria M.luteus (MIC=0.8 uM) and B.subtilis (MIC=1.5 uM). Less active against Gram-negative bacteria E.coli (MIC=32.5 uM) and yeast C.albicans (MIC=18.7 uM). Not active against S.aureus and P.aeruginosa. Has no hemolytic activity against human erythrocytes. Probably acts by disrupting membranes of target cells. This chain is Panurgine R, found in Panurgus calcaratus (Solitary bee).